The sequence spans 414 residues: Serine hydroxymethyltransferase (414 aa).

Residues Leu-121 and 125–127 each bind (6S)-5,6,7,8-tetrahydrofolate; that span reads GHL. Lys-230 is subject to N6-(pyridoxal phosphate)lysine.

This sequence belongs to the SHMT family. As to quaternary structure, homodimer. Pyridoxal 5'-phosphate serves as cofactor.

The protein localises to the cytoplasm. The enzyme catalyses (6R)-5,10-methylene-5,6,7,8-tetrahydrofolate + glycine + H2O = (6S)-5,6,7,8-tetrahydrofolate + L-serine. Its pathway is one-carbon metabolism; tetrahydrofolate interconversion. It participates in amino-acid biosynthesis; glycine biosynthesis; glycine from L-serine: step 1/1. Catalyzes the reversible interconversion of serine and glycine with tetrahydrofolate (THF) serving as the one-carbon carrier. This reaction serves as the major source of one-carbon groups required for the biosynthesis of purines, thymidylate, methionine, and other important biomolecules. Also exhibits THF-independent aldolase activity toward beta-hydroxyamino acids, producing glycine and aldehydes, via a retro-aldol mechanism. This is Serine hydroxymethyltransferase from Acidithiobacillus ferrooxidans (strain ATCC 23270 / DSM 14882 / CIP 104768 / NCIMB 8455) (Ferrobacillus ferrooxidans (strain ATCC 23270)).